The primary structure comprises 598 residues: NADPH-dependent diflavin oxidoreductase 1 (598 aa).

One can recognise a Flavodoxin-like domain in the interval 6–150 (LLVLFGSQTG…AIDPWVGDLW (145 aa)). FMN-binding positions include 12-17 (SQTGTA), 59-62 (ATTG), 97-106 (LGDSSYAKFN), and aspartate 132. The 243-residue stretch at 206-448 (LQPFLAPVIT…VRPGSLVFPK (243 aa)) folds into the FAD-binding FR-type domain. FAD contacts are provided by residues arginine 350, 382–385 (RAFS), and 416–419 (GLCS). NADP(+)-binding positions include threonine 461, 516 to 517 (SR), 522 to 526 (KVYVQ), and aspartate 559. Tryptophan 597 is an FAD binding site.

Belongs to the NADPH-dependent diflavin oxidoreductase NDOR1 family. The protein in the N-terminal section; belongs to the flavodoxin family. This sequence in the C-terminal section; belongs to the flavoprotein pyridine nucleotide cytochrome reductase family. In terms of assembly, interacts with CIAPIN1; as part of the cytosolic iron-sulfur (Fe-S) protein assembly (CIA) machinery. Interacts with DCPS. Requires FAD as cofactor. FMN serves as cofactor.

It localises to the cytoplasm. The protein localises to the perinuclear region. It catalyses the reaction 2 oxidized [2Fe-2S]-[protein] + NADPH = 2 reduced [2Fe-2S]-[protein] + NADP(+) + H(+). Functionally, NADPH-dependent reductase which is a central component of the cytosolic iron-sulfur (Fe-S) protein assembly (CIA) machinery. Transfers electrons from NADPH via its FAD and FMN prosthetic groups to the [2Fe-2S] cluster of CIAPIN1, another key component of the CIA machinery. In turn, this reduced cluster provides electrons for assembly of cytosolic iron-sulfur cluster proteins. It can also reduce the [2Fe-2S] cluster of CISD1 and activate this protein implicated in Fe/S cluster repair. In vitro can fully activate methionine synthase/MTR in the presence of soluble cytochrome b5/CYB5A. The polypeptide is NADPH-dependent diflavin oxidoreductase 1 (Mus musculus (Mouse)).